The chain runs to 500 residues: L-arabinose isomerase (500 aa).

Positions 306, 333, 350, and 450 each coordinate Mn(2+).

This sequence belongs to the arabinose isomerase family. In terms of assembly, homohexamer. Mn(2+) is required as a cofactor.

It catalyses the reaction beta-L-arabinopyranose = L-ribulose. It functions in the pathway carbohydrate degradation; L-arabinose degradation via L-ribulose; D-xylulose 5-phosphate from L-arabinose (bacterial route): step 1/3. Catalyzes the conversion of L-arabinose to L-ribulose. The sequence is that of L-arabinose isomerase from Salmonella newport (strain SL254).